We begin with the raw amino-acid sequence, 165 residues long: Phosphopantetheine adenylyltransferase (165 aa).

Residue Ser-9 participates in substrate binding. Residues 9-10 (SF) and His-17 contribute to the ATP site. Positions 41, 73, and 87 each coordinate substrate. ATP is bound by residues 88-90 (GLR), Glu-98, and 122-128 (YSFLSSS).

This sequence belongs to the bacterial CoaD family. In terms of assembly, homohexamer. It depends on Mg(2+) as a cofactor.

The protein resides in the cytoplasm. It catalyses the reaction (R)-4'-phosphopantetheine + ATP + H(+) = 3'-dephospho-CoA + diphosphate. The protein operates within cofactor biosynthesis; coenzyme A biosynthesis; CoA from (R)-pantothenate: step 4/5. Its function is as follows. Reversibly transfers an adenylyl group from ATP to 4'-phosphopantetheine, yielding dephospho-CoA (dPCoA) and pyrophosphate. The protein is Phosphopantetheine adenylyltransferase of Acidothermus cellulolyticus (strain ATCC 43068 / DSM 8971 / 11B).